Consider the following 510-residue polypeptide: Bifunctional purine biosynthesis protein PurH (510 aa).

Positions 1-142 constitute an MGS-like domain; the sequence is MRALISVSDK…KNFKDVLIVT (142 aa).

The protein belongs to the PurH family.

It carries out the reaction (6R)-10-formyltetrahydrofolate + 5-amino-1-(5-phospho-beta-D-ribosyl)imidazole-4-carboxamide = 5-formamido-1-(5-phospho-D-ribosyl)imidazole-4-carboxamide + (6S)-5,6,7,8-tetrahydrofolate. It catalyses the reaction IMP + H2O = 5-formamido-1-(5-phospho-D-ribosyl)imidazole-4-carboxamide. The protein operates within purine metabolism; IMP biosynthesis via de novo pathway; 5-formamido-1-(5-phospho-D-ribosyl)imidazole-4-carboxamide from 5-amino-1-(5-phospho-D-ribosyl)imidazole-4-carboxamide (10-formyl THF route): step 1/1. It functions in the pathway purine metabolism; IMP biosynthesis via de novo pathway; IMP from 5-formamido-1-(5-phospho-D-ribosyl)imidazole-4-carboxamide: step 1/1. This is Bifunctional purine biosynthesis protein PurH from Campylobacter curvus (strain 525.92).